A 382-amino-acid chain; its full sequence is Intermediate transcription factor 3 large subunit (382 aa).

Belongs to the poxviruses A23 family. In terms of assembly, heterodimer of a 45 kDa and a 32 kDa subunit.

Its function is as follows. Acts with RNA polymerase to initiate transcription from intermediate gene promoters. This is Intermediate transcription factor 3 large subunit (VITF3L) from Ectromelia virus (strain Moscow) (ECTV).